Here is a 431-residue protein sequence, read N- to C-terminus: Keratin, type I cytoskeletal 18 (431 aa).

The segment at 2–83 is head; it reads SLRTSYSVRS…SGSTGEIMGN (82 aa). Residue S12 is modified to Phosphoserine. The residue at position 13 (T13) is a Phosphothreonine. Phosphoserine is present on residues S22 and S36. Residues 84–119 are coil 1A; sequence EKMAMQNLNDRLASYLEKVRILEQANSKLELKIREA. Residues 84-395 enclose the IF rod domain; it reads EKMAMQNLND…RLLDGGDFKL (312 aa). Positions 120–136 are linker 1; that stretch reads LEKRGPDVHDYSRFQPI. The coil 1B stretch occupies residues 137–228; the sequence is VDELRKKIFD…KNHDNEVMEL (92 aa). Positions 229–252 are linker 12; that stretch reads RNQISQSGVQVDVDAPKGQDLSQI. Residues 253 to 390 are coil 2; it reads MEEIRAKYEK…IATYRRLLDG (138 aa). The segment at 391–431 is tail; that stretch reads GDFKLQDALEEQKKVKVMTVTQTLVDGKVVSSSTETKERKL.

Belongs to the intermediate filament family. As to quaternary structure, heterotetramer of two type I and two type II keratins. Keratin-18 associates with keratin-8. In terms of processing, proteolytically cleaved by caspases during epithelial cell apoptosis. In terms of tissue distribution, expressed in simple epithelia such as intestinal mucosa, bile duct, hepatocytes, renal tubules, endothelia, ocular lens epithelium, and in a variety of mesenchymally-derived cells such as blood vessel endothelia, pillar gill cells, optic nerve glial cells, fibroblasts, interstitial cells, chondrocytes and ovarian theca cells. Also expressed in epidermis, pharyngeal mucosa, mucosa of anterior esophagus, gill mucosa and cornea.

Functionally, when phosphorylated, plays a role in filament reorganization. This Danio rerio (Zebrafish) protein is Keratin, type I cytoskeletal 18.